The primary structure comprises 38 residues: Allatostatin-C (38 aa).

Positions 1–19 (MRRALDGPGSSSLDTRQAD) are excised as a propeptide. Glutamine 22 carries the pyrrolidone carboxylic acid; partial modification.

This sequence belongs to the allatostatin family. In its non-pyroglutamate form, expressed in antennal lobe (AL), corpora cardiaca (CC), corpora allata (CA) and gnathal ganglion (GNG) with expression in AL detected in most animals and expression in CC, CA and GNG detected in few animals (at protein level). In its pyroglutamate form, expressed in antennal lobe (AL), corpora cardiaca (CC) and corpora allata (CA) with expression detected in few animals (at protein level). Not expressed in GNG (protein level).

It is found in the secreted. In terms of biological role, strongly inhibits juvenile hormone biosynthesis. The chain is Allatostatin-C from Agrotis ipsilon (Black cutworm moth).